Consider the following 78-residue polypeptide: Large ribosomal subunit protein bL31 (78 aa).

This sequence belongs to the bacterial ribosomal protein bL31 family. Type A subfamily. In terms of assembly, part of the 50S ribosomal subunit.

Binds the 23S rRNA. This Rickettsia conorii (strain ATCC VR-613 / Malish 7) protein is Large ribosomal subunit protein bL31 (rpmE).